A 135-amino-acid chain; its full sequence is MADHNDRGRQGEEIALKHLRQQGYQIEALNWQSGRRELDIVASTSRELVVVEVKTRTEGFLLAPEEAVDARKRRLISESAHHYVRMYAIDLPVRFDVISVVLSADGSCKRIEHRENAFPLLLKRSQRSTPRRRRL.

This sequence belongs to the UPF0102 family.

The protein is UPF0102 protein PGN_1801 of Porphyromonas gingivalis (strain ATCC 33277 / DSM 20709 / CIP 103683 / JCM 12257 / NCTC 11834 / 2561).